Here is a 315-residue protein sequence, read N- to C-terminus: Mitochondrial glutamate carrier 2 (315 aa).

Solcar repeat units follow at residues Leu6–Leu92, Arg100–Leu210, and Ala219–Glu308. 3 consecutive transmembrane segments (helical) span residues Leu12–Ala32, Phe61–Ile81, and Met106–Leu126. A disordered region spans residues Gln141–Thr160. The span at Gly142–Ser159 shows a compositional bias: polar residues. A Phosphoserine modification is found at Ser145. 3 consecutive transmembrane segments (helical) span residues Gly185 to Ala205, Phe225 to Leu245, and Ala288 to Glu308.

Belongs to the mitochondrial carrier (TC 2.A.29) family. In terms of tissue distribution, expressed in brain, to a lesser extent in testis, and poorly in all the other tissues.

It is found in the mitochondrion inner membrane. The enzyme catalyses L-glutamate(in) + H(+)(in) = L-glutamate(out) + H(+)(out). Responsible for the transport of glutamate from the cytosol into the mitochondrial matrix with the concomitant import of a proton (symport system). This chain is Mitochondrial glutamate carrier 2, found in Homo sapiens (Human).